A 107-amino-acid polypeptide reads, in one-letter code: UPF0122 protein MYPE4850 (107 aa).

The protein belongs to the UPF0122 family.

Functionally, might take part in the signal recognition particle (SRP) pathway. This is inferred from the conservation of its genetic proximity to ftsY/ffh. May be a regulatory protein. This chain is UPF0122 protein MYPE4850, found in Malacoplasma penetrans (strain HF-2) (Mycoplasma penetrans).